Reading from the N-terminus, the 795-residue chain is Phenylalanine--tRNA ligase beta subunit (795 aa).

Positions 39–148 constitute a tRNA-binding domain; the sequence is AGQFHGVVVG…IDAPLGVDLR (110 aa). In terms of domain architecture, B5 spans 401 to 476; that stretch reads PQSATITLRR…RIYGYNNIPD (76 aa). Residues aspartate 454, aspartate 460, glutamate 463, and glutamate 464 each coordinate Mg(2+). Residues 701–794 form the FDX-ACB domain; that stretch reads SRFPSNRRDI…LKQRFQASLR (94 aa).

The protein belongs to the phenylalanyl-tRNA synthetase beta subunit family. Type 1 subfamily. Tetramer of two alpha and two beta subunits. Mg(2+) is required as a cofactor.

The protein localises to the cytoplasm. The catalysed reaction is tRNA(Phe) + L-phenylalanine + ATP = L-phenylalanyl-tRNA(Phe) + AMP + diphosphate + H(+). In Photorhabdus laumondii subsp. laumondii (strain DSM 15139 / CIP 105565 / TT01) (Photorhabdus luminescens subsp. laumondii), this protein is Phenylalanine--tRNA ligase beta subunit.